Here is a 1299-residue protein sequence, read N- to C-terminus: Tubulin polyglutamylase TTLL5 (1299 aa).

Residues 62–407 (RYHLSYKIVR…VCQDPAQRAS (346 aa)) form the TTL domain. ATP contacts are provided by residues Lys180, 186 to 187 (RG), 208 to 211 (SRYI), and 221 to 223 (KFD). Arg186 provides a ligand contact to a protein. Residue Arg247 coordinates L-glutamate. 268 to 269 (TN) is a binding site for ATP. L-glutamate contacts are provided by Tyr270, Ser271, and Lys293. The Mg(2+) site is built by Asp353, Glu366, and Asn368. A c-MTBD region region spans residues 378–488 (PLDLKIKASM…RGGFIRIFPT (111 aa)). Position 384 (Lys384) interacts with L-glutamate. 5 disordered regions span residues 589-626 (EMNV…FLRE), 832-853 (GTHS…KGDH), 918-941 (SSVT…IPSA), 1088-1130 (RSSA…RSLQ), and 1217-1275 (SSAT…QLNG). Acidic residues predominate over residues 597–617 (ESEEEEEVALDNEEEEQEASQ). Over residues 838 to 847 (SKNNNSYSDS) the composition is skewed to low complexity. Polar residues-rich tracts occupy residues 1104 to 1130 (SGPT…RSLQ), 1217 to 1230 (SSAT…TTLP), and 1258 to 1275 (ATSQ…QLNG).

It belongs to the tubulin--tyrosine ligase family. In terms of assembly, interacts with the transcriptional coactivators NCOA1/SRC-1 and NCOA2/TIF2. The cofactor is Mg(2+).

It is found in the cell projection. It localises to the cilium. The protein localises to the cytoplasm. The protein resides in the cytoskeleton. Its subcellular location is the cilium basal body. It is found in the nucleus. It catalyses the reaction L-glutamyl-[protein] + L-glutamate + ATP = gamma-L-glutamyl-L-glutamyl-[protein] + ADP + phosphate + H(+). The enzyme catalyses (L-glutamyl)(n)-gamma-L-glutamyl-L-glutamyl-[protein] + L-glutamate + ATP = (L-glutamyl)(n+1)-gamma-L-glutamyl-L-glutamyl-[protein] + ADP + phosphate + H(+). In terms of biological role, polyglutamylase which modifies tubulin, generating polyglutamate side chains on the gamma-carboxyl group of specific glutamate residues within the C-terminal tail of tubulin. Preferentially mediates ATP-dependent initiation step of the polyglutamylation reaction over the elongation step. Preferentially modifies the alpha-tubulin tail over a beta-tail. Required for CCSAP localization to both polyglutamylated spindle and cilia microtubules. Increases the effects of transcriptional coactivator NCOA2/TIF2 in glucocorticoid receptor-mediated repression and induction and in androgen receptor-mediated induction. This Pongo abelii (Sumatran orangutan) protein is Tubulin polyglutamylase TTLL5 (TTLL5).